The chain runs to 291 residues: Small ribosomal subunit biogenesis GTPase RsgA (291 aa).

One can recognise a CP-type G domain in the interval Glu63–Leu221. GTP-binding positions include Thr112–Asp115 and Gly164–Thr172. Zn(2+) contacts are provided by Cys245, Cys250, His252, and Cys258.

This sequence belongs to the TRAFAC class YlqF/YawG GTPase family. RsgA subfamily. As to quaternary structure, monomer. Associates with 30S ribosomal subunit, binds 16S rRNA. It depends on Zn(2+) as a cofactor.

It is found in the cytoplasm. Functionally, one of several proteins that assist in the late maturation steps of the functional core of the 30S ribosomal subunit. Helps release RbfA from mature subunits. May play a role in the assembly of ribosomal proteins into the subunit. Circularly permuted GTPase that catalyzes slow GTP hydrolysis, GTPase activity is stimulated by the 30S ribosomal subunit. This is Small ribosomal subunit biogenesis GTPase RsgA from Staphylococcus aureus (strain COL).